The chain runs to 662 residues: Serine/threonine-protein kinase PTK1/STK1 (662 aa).

The tract at residues 35–119 (GNKLKKKASL…SSTSRNLSNS (85 aa)) is disordered. The span at 50–60 (STSTNDSESSS) shows a compositional bias: low complexity. 2 stretches are compositionally biased toward polar residues: residues 61-91 (PKLPNSLKTSRRANSFAHTTNSKRSLSSAST) and 98-119 (GSSTSISRGNRHSSTSRNLSNS). The Protein kinase domain maps to 196 to 503 (DDENKTIGWG…IDDLFEDPWF (308 aa)). ATP is bound by residues 202-210 (IGWGGSCEV) and Lys-226. Asp-329 acts as the Proton acceptor in catalysis. Positions 605 to 631 (TLTLSEEPPATPAPSAPSAPSARVRGH) are disordered.

The protein belongs to the protein kinase superfamily. Ser/Thr protein kinase family.

The catalysed reaction is L-seryl-[protein] + ATP = O-phospho-L-seryl-[protein] + ADP + H(+). The enzyme catalyses L-threonyl-[protein] + ATP = O-phospho-L-threonyl-[protein] + ADP + H(+). Its function is as follows. Essential determinant for low-affinity spermidine transport. The polypeptide is Serine/threonine-protein kinase PTK1/STK1 (PTK1) (Saccharomyces cerevisiae (strain ATCC 204508 / S288c) (Baker's yeast)).